We begin with the raw amino-acid sequence, 309 residues long: Ribonuclease Z (309 aa).

H63, H65, D67, H68, H145, D216, and H274 together coordinate Zn(2+). Residue D67 is the Proton acceptor of the active site.

This sequence belongs to the RNase Z family. As to quaternary structure, homodimer. Zn(2+) is required as a cofactor.

It catalyses the reaction Endonucleolytic cleavage of RNA, removing extra 3' nucleotides from tRNA precursor, generating 3' termini of tRNAs. A 3'-hydroxy group is left at the tRNA terminus and a 5'-phosphoryl group is left at the trailer molecule.. Zinc phosphodiesterase, which displays some tRNA 3'-processing endonuclease activity. Probably involved in tRNA maturation, by removing a 3'-trailer from precursor tRNA. The sequence is that of Ribonuclease Z from Streptococcus mutans serotype c (strain ATCC 700610 / UA159).